Consider the following 219-residue polypeptide: Transcriptional regulatory protein QseB (219 aa).

One can recognise a Response regulatory domain in the interval 2 to 116 (RILLVEDDTL…EVAARLEALV (115 aa)). 4-aspartylphosphate is present on aspartate 51. Positions 124–218 (SSELRHGQVT…VHGIGYTLGD (95 aa)) form a DNA-binding region, ompR/PhoB-type.

Post-translationally, phosphorylated by QseC.

The protein localises to the cytoplasm. Its function is as follows. Member of a two-component regulatory system QseB/QseC. Activates the flagella regulon by activating transcription of flhDC. The chain is Transcriptional regulatory protein QseB (qseB) from Salmonella typhimurium (strain LT2 / SGSC1412 / ATCC 700720).